Here is a 539-residue protein sequence, read N- to C-terminus: CTP synthase (539 aa).

Positions 1 to 267 (MTKFIFVTGG…DDLVIKRLDL (267 aa)) are amidoligase domain. S13 serves as a coordination point for CTP. S13 lines the UTP pocket. 14–19 (SLGKGI) contributes to the ATP binding site. L-glutamine is bound at residue Y54. An ATP-binding site is contributed by D71. Mg(2+)-binding residues include D71 and E141. CTP-binding positions include 148–150 (DIE), 188–193 (KTKPTQ), and K224. Residues 188 to 193 (KTKPTQ) and K224 contribute to the UTP site. 240-242 (RDA) contributes to the ATP binding site. A Glutamine amidotransferase type-1 domain is found at 293–535 (TIGLVGKYVS…IEAANKYKEA (243 aa)). G355 is an L-glutamine binding site. The active-site Nucleophile; for glutamine hydrolysis is C382. L-glutamine-binding positions include 383-386 (LGMQ), E406, and R463. Catalysis depends on residues H508 and E510.

Belongs to the CTP synthase family. Homotetramer.

It carries out the reaction UTP + L-glutamine + ATP + H2O = CTP + L-glutamate + ADP + phosphate + 2 H(+). The enzyme catalyses L-glutamine + H2O = L-glutamate + NH4(+). It catalyses the reaction UTP + NH4(+) + ATP = CTP + ADP + phosphate + 2 H(+). It participates in pyrimidine metabolism; CTP biosynthesis via de novo pathway; CTP from UDP: step 2/2. Its activity is regulated as follows. Allosterically activated by GTP, when glutamine is the substrate; GTP has no effect on the reaction when ammonia is the substrate. The allosteric effector GTP functions by stabilizing the protein conformation that binds the tetrahedral intermediate(s) formed during glutamine hydrolysis. Inhibited by the product CTP, via allosteric rather than competitive inhibition. Catalyzes the ATP-dependent amination of UTP to CTP with either L-glutamine or ammonia as the source of nitrogen. Regulates intracellular CTP levels through interactions with the four ribonucleotide triphosphates. The polypeptide is CTP synthase (Staphylococcus carnosus (strain TM300)).